Consider the following 551-residue polypeptide: GMP synthase [glutamine-hydrolyzing] (551 aa).

Residues 40-233 (KILIVDFGSQ…VRKIAGLTGD (194 aa)) enclose the Glutamine amidotransferase type-1 domain. The active-site Nucleophile is cysteine 117. Active-site residues include histidine 207 and glutamate 209. The GMPS ATP-PPase domain maps to 234-426 (WTMRAFREEE…LGLPEIFVGR (193 aa)). 261–267 (SGGVDSA) lines the ATP pocket.

As to quaternary structure, homodimer.

It carries out the reaction XMP + L-glutamine + ATP + H2O = GMP + L-glutamate + AMP + diphosphate + 2 H(+). Its pathway is purine metabolism; GMP biosynthesis; GMP from XMP (L-Gln route): step 1/1. Functionally, catalyzes the synthesis of GMP from XMP. This is GMP synthase [glutamine-hydrolyzing] from Bradyrhizobium diazoefficiens (strain JCM 10833 / BCRC 13528 / IAM 13628 / NBRC 14792 / USDA 110).